We begin with the raw amino-acid sequence, 323 residues long: Mycothiol acetyltransferase (323 aa).

N-acetyltransferase domains are found at residues 21-176 (ELLR…VSLR) and 173-323 (VSLR…LTKN). Glutamate 44 is a 1D-myo-inositol 2-(L-cysteinylamino)-2-deoxy-alpha-D-glucopyranoside binding site. 98 to 100 (LAV) contacts acetyl-CoA. The 1D-myo-inositol 2-(L-cysteinylamino)-2-deoxy-alpha-D-glucopyranoside site is built by glutamate 200, lysine 240, and glutamate 253. Acetyl-CoA is bound by residues 257–259 (VGV) and 264–270 (QGLGLGK). Tyrosine 291 provides a ligand contact to 1D-myo-inositol 2-(L-cysteinylamino)-2-deoxy-alpha-D-glucopyranoside.

It belongs to the acetyltransferase family. MshD subfamily. In terms of assembly, monomer.

It carries out the reaction 1D-myo-inositol 2-(L-cysteinylamino)-2-deoxy-alpha-D-glucopyranoside + acetyl-CoA = mycothiol + CoA + H(+). Functionally, catalyzes the transfer of acetyl from acetyl-CoA to desacetylmycothiol (Cys-GlcN-Ins) to form mycothiol. This Paenarthrobacter aurescens (strain TC1) protein is Mycothiol acetyltransferase.